We begin with the raw amino-acid sequence, 320 residues long: Ferrochelatase (320 aa).

Positions 194 and 275 each coordinate Fe cation.

The protein belongs to the ferrochelatase family. As to quaternary structure, monomer.

The protein resides in the cytoplasm. The catalysed reaction is heme b + 2 H(+) = protoporphyrin IX + Fe(2+). It participates in porphyrin-containing compound metabolism; protoheme biosynthesis; protoheme from protoporphyrin-IX: step 1/1. Functionally, catalyzes the ferrous insertion into protoporphyrin IX. The protein is Ferrochelatase of Salmonella agona (strain SL483).